The chain runs to 160 residues: SsrA-binding protein (160 aa).

The protein belongs to the SmpB family.

It is found in the cytoplasm. Its function is as follows. Required for rescue of stalled ribosomes mediated by trans-translation. Binds to transfer-messenger RNA (tmRNA), required for stable association of tmRNA with ribosomes. tmRNA and SmpB together mimic tRNA shape, replacing the anticodon stem-loop with SmpB. tmRNA is encoded by the ssrA gene; the 2 termini fold to resemble tRNA(Ala) and it encodes a 'tag peptide', a short internal open reading frame. During trans-translation Ala-aminoacylated tmRNA acts like a tRNA, entering the A-site of stalled ribosomes, displacing the stalled mRNA. The ribosome then switches to translate the ORF on the tmRNA; the nascent peptide is terminated with the 'tag peptide' encoded by the tmRNA and targeted for degradation. The ribosome is freed to recommence translation, which seems to be the essential function of trans-translation. In Actinobacillus succinogenes (strain ATCC 55618 / DSM 22257 / CCUG 43843 / 130Z), this protein is SsrA-binding protein.